A 149-amino-acid polypeptide reads, in one-letter code: Putative pre-16S rRNA nuclease (149 aa).

It belongs to the YqgF nuclease family.

The protein resides in the cytoplasm. Could be a nuclease involved in processing of the 5'-end of pre-16S rRNA. The protein is Putative pre-16S rRNA nuclease of Synechococcus sp. (strain ATCC 27144 / PCC 6301 / SAUG 1402/1) (Anacystis nidulans).